The sequence spans 366 residues: Ribosomal RNA large subunit methyltransferase M (366 aa).

S-adenosyl-L-methionine contacts are provided by residues Ser-188, 221-224 (CPGG), Asp-240, Asp-260, and Asp-277. The active-site Proton acceptor is Lys-306.

This sequence belongs to the class I-like SAM-binding methyltransferase superfamily. RNA methyltransferase RlmE family. RlmM subfamily. Monomer.

It localises to the cytoplasm. It carries out the reaction cytidine(2498) in 23S rRNA + S-adenosyl-L-methionine = 2'-O-methylcytidine(2498) in 23S rRNA + S-adenosyl-L-homocysteine + H(+). In terms of biological role, catalyzes the 2'-O-methylation at nucleotide C2498 in 23S rRNA. The sequence is that of Ribosomal RNA large subunit methyltransferase M from Salmonella paratyphi C (strain RKS4594).